The chain runs to 124 residues: Small ribosomal subunit protein bS6 (124 aa).

Residues 97-124 form a disordered region; that stretch reads TGPSPMMKEVQREEAKKAAAAQPTEAQA. Low complexity predominate over residues 114-124; the sequence is AAAAQPTEAQA.

This sequence belongs to the bacterial ribosomal protein bS6 family.

Its function is as follows. Binds together with bS18 to 16S ribosomal RNA. This Paraburkholderia phymatum (strain DSM 17167 / CIP 108236 / LMG 21445 / STM815) (Burkholderia phymatum) protein is Small ribosomal subunit protein bS6.